A 144-amino-acid chain; its full sequence is MGRFIFVSFGLLVVFLSLSGTAADCPSDWSSFRRYCYQVFQQKMNWEDAEKFCTQQHRGSHLVSFHSSEEVDFVVSKTLPILKANFVWMGLSNVWNECAKEWSDGTKLDYKAWSGQSDCITSKTTDNQWLSMDCSSKRYVVCKF.

The first 23 residues, Met-1–Ala-23, serve as a signal peptide directing secretion. 3 disulfide bridges follow: Cys-25/Cys-36, Cys-53/Cys-142, and Cys-119/Cys-134. The C-type lectin domain maps to Phe-32–Lys-143.

The protein belongs to the snaclec family. In terms of assembly, heterodimer of subunits alpha and beta; disulfide-linked. In terms of tissue distribution, expressed by the venom gland.

Its subcellular location is the secreted. Snaclec that induces platelet aggregation in either human platelet rich plasma (PRP) or washed platelet suspensions. It causes aggregation in a dose-dependent manner even in the absence of various platelet agonists such as ADP or von Willebrand factor (vWF). Interestingly, it does not induce aggregation in rabbit PRP. A monoclonal antibody against the platelet GPIb receptor blocks the aggregation induced by trimecetin, suggesting that it acts by binding to GPIb (GP1BA/GP1BB). This chain is Snaclec trimecetin subunit beta, found in Protobothrops mucrosquamatus (Taiwan habu).